An 837-amino-acid polypeptide reads, in one-letter code: Leucine-zipper-like transcriptional regulator 1 (837 aa).

N-acetylalanine is present on Ala-2. Kelch repeat units follow at residues 76–125, 127–182, 184–235, 236–282, 292–338, and 396–447; these read AIYV…VYGS, MFVF…VYSD, LWIF…VCRD, KMFV…QRRY, HLYV…PERA, and AMYI…FVLG. A disordered region spans residues 324–352; sequence SSDSEVGGAEMPERASSSEDASTLTSEER. 2 BTB domains span residues 440-534 and 664-733; these read CDVE…KYPR and CDIT…NMPP.

It belongs to the LZTR1 family. As to quaternary structure, homodimer. Component of the BCR(LZTR1) E3 ubiquitin ligase complex, at least composed of CUL3, LZTR1 and RBX1. Interacts with Ras (K-Ras/KRAS, N-Ras/NRAS and H-Ras/HRAS). Interacts with RAF1. Interacts with SHOC2. Interacts with PPP1CB. In terms of processing, phosphorylated on tyrosine upon induction of apoptosis, leading to its degradation by the proteasome. In terms of tissue distribution, widely expressed.

Its subcellular location is the endomembrane system. The protein localises to the recycling endosome. The protein resides in the golgi apparatus. The protein operates within protein modification; protein ubiquitination. Its function is as follows. Substrate-specific adapter of a BCR (BTB-CUL3-RBX1) E3 ubiquitin-protein ligase complex that mediates ubiquitination of Ras (K-Ras/KRAS, N-Ras/NRAS and H-Ras/HRAS). Is a negative regulator of RAS-MAPK signaling that acts by controlling Ras levels and decreasing Ras association with membranes. This chain is Leucine-zipper-like transcriptional regulator 1, found in Mus musculus (Mouse).